A 285-amino-acid chain; its full sequence is Heme oxygenase 3, chloroplastic (285 aa).

The transit peptide at 1 to 58 directs the protein to the chloroplast; sequence MATTRLNPSCHFPASTRLSCESYLGLRTTGRISYARTLTAPRGYLAVKANGGQASVVT. His89 contacts heme b. Residues 89-105 show a composition bias toward basic and acidic residues; sequence HTKDQAREGEKESRSPE. The tract at residues 89–109 is disordered; sequence HTKDQAREGEKESRSPEEGPV.

It belongs to the heme oxygenase family. Widely expressed at low levels.

It is found in the plastid. The protein localises to the chloroplast. The enzyme catalyses heme b + 3 reduced [NADPH--hemoprotein reductase] + 3 O2 = biliverdin IXalpha + CO + Fe(2+) + 3 oxidized [NADPH--hemoprotein reductase] + 3 H2O + H(+). Its function is as follows. Catalyzes the opening of the heme ring to form the open-chain tetrapyrrole biliverdin IX with the release of iron and carbon monoxide (CO). Produces specifically the biliverdin IX-alpha isomer. Plays a minor role in phytochrome assembly and photomorphogenesis. The sequence is that of Heme oxygenase 3, chloroplastic (HO3) from Arabidopsis thaliana (Mouse-ear cress).